A 219-amino-acid polypeptide reads, in one-letter code: U-scoloptoxin(11)-Sm7a (219 aa).

An N-terminal signal peptide occupies residues 1-15 (MYLFLMINYFVLANS).

Belongs to the scoloptoxin-11 family. Post-translationally, contains 8 disulfide bonds. Expressed by the venom gland.

The protein localises to the secreted. The polypeptide is U-scoloptoxin(11)-Sm7a (Scolopendra morsitans (Tanzanian blue ringleg centipede)).